The sequence spans 257 residues: MADS-box transcription factor 1 (257 aa).

The MADS-box domain occupies 1–61 (MGRGKVELKR…GRLFEFSSSS (61 aa)). Residues 85-175 (NEINYQEYLK…RKKLQETSAE (91 aa)) enclose the K-box domain.

As to quaternary structure, may interact with the K-box of MADS6, MADS14 and MADS15.

The protein resides in the nucleus. In terms of biological role, probable transcription factor involved in the development of floral organs. Required for the formation of inner floral organs (lodicules, stamens and carpels, or whorls 2, 3 and 4) and the lemma and palea (whorl 1), which are grass floral organs analogous to sepals. May be involved in the control of flowering time. Seems to act as transcriptional activator. May act upstream of the auxin-responsive protein GH3.8. The chain is MADS-box transcription factor 1 (MADS1) from Oryza sativa subsp. indica (Rice).